The following is a 577-amino-acid chain: Isocitrate dehydrogenase kinase/phosphatase (577 aa).

ATP is bound by residues 324–330 and Lys345; that span reads APGIRGL. Residue Asp380 is part of the active site.

The protein belongs to the AceK family.

The protein localises to the cytoplasm. The enzyme catalyses L-seryl-[isocitrate dehydrogenase] + ATP = O-phospho-L-seryl-[isocitrate dehydrogenase] + ADP + H(+). Its function is as follows. Bifunctional enzyme which can phosphorylate or dephosphorylate isocitrate dehydrogenase (IDH) on a specific serine residue. This is a regulatory mechanism which enables bacteria to bypass the Krebs cycle via the glyoxylate shunt in response to the source of carbon. When bacteria are grown on glucose, IDH is fully active and unphosphorylated, but when grown on acetate or ethanol, the activity of IDH declines drastically concomitant with its phosphorylation. In Pseudoalteromonas atlantica (strain T6c / ATCC BAA-1087), this protein is Isocitrate dehydrogenase kinase/phosphatase.